The chain runs to 271 residues: Type III pantothenate kinase (271 aa).

6-13 provides a ligand contact to ATP; the sequence is DVRNTNIV. 109–112 provides a ligand contact to substrate; the sequence is GADR. Catalysis depends on D111, which acts as the Proton acceptor. D131 serves as a coordination point for K(+). T134 is an ATP binding site. T186 is a binding site for substrate.

The protein belongs to the type III pantothenate kinase family. In terms of assembly, homodimer. It depends on NH4(+) as a cofactor. Requires K(+) as cofactor.

It localises to the cytoplasm. The catalysed reaction is (R)-pantothenate + ATP = (R)-4'-phosphopantothenate + ADP + H(+). It functions in the pathway cofactor biosynthesis; coenzyme A biosynthesis; CoA from (R)-pantothenate: step 1/5. Functionally, catalyzes the phosphorylation of pantothenate (Pan), the first step in CoA biosynthesis. The sequence is that of Type III pantothenate kinase from Rhodococcus erythropolis (strain PR4 / NBRC 100887).